A 205-amino-acid polypeptide reads, in one-letter code: MAKKLVDDLEREGVLKSERVKKALLSVPREEFVMPEYRMMAYEDRPLPLFADATISAPHMVAMMCELIEPRPGMSILEVGTGSGYHAAVCAEAIERRGKVYTVEIVKGLAIYAAQNLERLGYWGVVEVFHSDGKRGLEKFAPYDAIIVTAAAASIPSALVNQLKDGGIMVIPVEEGFGQVLYKVVRRGEKTEKKAVTYVLFVPLR.

Residue serine 56 is part of the active site.

The protein belongs to the methyltransferase superfamily. L-isoaspartyl/D-aspartyl protein methyltransferase family.

Its subcellular location is the cytoplasm. It catalyses the reaction [protein]-L-isoaspartate + S-adenosyl-L-methionine = [protein]-L-isoaspartate alpha-methyl ester + S-adenosyl-L-homocysteine. Functionally, catalyzes the methyl esterification of L-isoaspartyl residues in peptides and proteins that result from spontaneous decomposition of normal L-aspartyl and L-asparaginyl residues. It plays a role in the repair and/or degradation of damaged proteins. This chain is Protein-L-isoaspartate O-methyltransferase, found in Pyrobaculum arsenaticum (strain DSM 13514 / JCM 11321 / PZ6).